Here is a 95-residue protein sequence, read N- to C-terminus: Aspartyl/glutamyl-tRNA(Asn/Gln) amidotransferase subunit C (95 aa).

It belongs to the GatC family. As to quaternary structure, heterotrimer of A, B and C subunits.

It catalyses the reaction L-glutamyl-tRNA(Gln) + L-glutamine + ATP + H2O = L-glutaminyl-tRNA(Gln) + L-glutamate + ADP + phosphate + H(+). It carries out the reaction L-aspartyl-tRNA(Asn) + L-glutamine + ATP + H2O = L-asparaginyl-tRNA(Asn) + L-glutamate + ADP + phosphate + 2 H(+). Allows the formation of correctly charged Asn-tRNA(Asn) or Gln-tRNA(Gln) through the transamidation of misacylated Asp-tRNA(Asn) or Glu-tRNA(Gln) in organisms which lack either or both of asparaginyl-tRNA or glutaminyl-tRNA synthetases. The reaction takes place in the presence of glutamine and ATP through an activated phospho-Asp-tRNA(Asn) or phospho-Glu-tRNA(Gln). In Pelagibacter ubique (strain HTCC1062), this protein is Aspartyl/glutamyl-tRNA(Asn/Gln) amidotransferase subunit C.